A 399-amino-acid polypeptide reads, in one-letter code: 1-deoxy-D-xylulose 5-phosphate reductoisomerase (399 aa).

NADPH is bound by residues Thr-11, Gly-12, Ser-13, Ile-14, Gly-37, Asn-39, and Asn-125. Residue Lys-126 coordinates 1-deoxy-D-xylulose 5-phosphate. NADPH is bound at residue Glu-127. Mn(2+) is bound at residue Asp-151. The 1-deoxy-D-xylulose 5-phosphate site is built by Ser-152, Glu-153, Ser-177, and His-200. Glu-153 is a binding site for Mn(2+). Gly-206 is a binding site for NADPH. 1-deoxy-D-xylulose 5-phosphate-binding residues include Ser-213, Asn-218, Lys-219, and Glu-222. Position 222 (Glu-222) interacts with Mn(2+).

The protein belongs to the DXR family. Mg(2+) is required as a cofactor. It depends on Mn(2+) as a cofactor.

The enzyme catalyses 2-C-methyl-D-erythritol 4-phosphate + NADP(+) = 1-deoxy-D-xylulose 5-phosphate + NADPH + H(+). The protein operates within isoprenoid biosynthesis; isopentenyl diphosphate biosynthesis via DXP pathway; isopentenyl diphosphate from 1-deoxy-D-xylulose 5-phosphate: step 1/6. Its function is as follows. Catalyzes the NADPH-dependent rearrangement and reduction of 1-deoxy-D-xylulose-5-phosphate (DXP) to 2-C-methyl-D-erythritol 4-phosphate (MEP). This Nostoc sp. (strain PCC 7120 / SAG 25.82 / UTEX 2576) protein is 1-deoxy-D-xylulose 5-phosphate reductoisomerase.